Reading from the N-terminus, the 141-residue chain is Large ribosomal subunit protein uL11 (141 aa).

The protein belongs to the universal ribosomal protein uL11 family. Part of the ribosomal stalk of the 50S ribosomal subunit. Interacts with L10 and the large rRNA to form the base of the stalk. L10 forms an elongated spine to which L12 dimers bind in a sequential fashion forming a multimeric L10(L12)X complex. Post-translationally, one or more lysine residues are methylated.

Forms part of the ribosomal stalk which helps the ribosome interact with GTP-bound translation factors. The polypeptide is Large ribosomal subunit protein uL11 (Pseudothermotoga lettingae (strain ATCC BAA-301 / DSM 14385 / NBRC 107922 / TMO) (Thermotoga lettingae)).